A 402-amino-acid polypeptide reads, in one-letter code: Adenylyltransferase and sulfurtransferase MOCS3 (402 aa).

Residues Gly47, Asp68, 75–79, Lys92, and 136–137 each bind ATP; these read DNLHR and DN. Cys178 and Cys181 together coordinate Zn(2+). Cys195 serves as the catalytic Glycyl thioester intermediate; for adenylyltransferase activity. Zn(2+)-binding residues include Cys253 and Cys256. The region spanning 303–400 is the Rhodanese domain; that stretch reads AARKQFLLDT…WALKINDEFP (98 aa). The active-site Cysteine persulfide intermediate; for sulfurtransferase activity is the Cys359.

It in the N-terminal section; belongs to the HesA/MoeB/ThiF family. UBA4 subfamily. Zn(2+) is required as a cofactor.

The protein resides in the cytoplasm. The protein localises to the cytosol. The enzyme catalyses [molybdopterin-synthase sulfur-carrier protein]-C-terminal Gly-Gly + ATP + H(+) = [molybdopterin-synthase sulfur-carrier protein]-C-terminal Gly-Gly-AMP + diphosphate. The catalysed reaction is [molybdopterin-synthase sulfur-carrier protein]-C-terminal Gly-Gly-AMP + S-sulfanyl-L-cysteinyl-[cysteine desulfurase] + AH2 = [molybdopterin-synthase sulfur-carrier protein]-C-terminal-Gly-aminoethanethioate + L-cysteinyl-[cysteine desulfurase] + A + AMP + 2 H(+). It functions in the pathway tRNA modification; 5-methoxycarbonylmethyl-2-thiouridine-tRNA biosynthesis. Its pathway is cofactor biosynthesis; molybdopterin biosynthesis. In terms of biological role, plays a central role in 2-thiolation of mcm(5)S(2)U at tRNA wobble positions of cytosolic tRNA(Lys), tRNA(Glu) and tRNA(Gln). Also essential during biosynthesis of the molybdenum cofactor. Acts by mediating the C-terminal thiocarboxylation of sulfur carriers URM1 and MOCS2A. Its N-terminus first activates URM1 and MOCS2A as acyl-adenylates (-COAMP), then the persulfide sulfur on the catalytic cysteine is transferred to URM1 and MOCS2A to form thiocarboxylation (-COSH) of their C-terminus. The reaction probably involves hydrogen sulfide that is generated from the persulfide intermediate and that acts as a nucleophile towards URM1 and MOCS2A. Subsequently, a transient disulfide bond is formed. Does not use thiosulfate as sulfur donor; NFS1 probably acting as a sulfur donor for thiocarboxylation reactions. This Caenorhabditis briggsae protein is Adenylyltransferase and sulfurtransferase MOCS3.